Consider the following 982-residue polypeptide: Protein lin-10 (982 aa).

Residues 1 to 16 are compositionally biased toward polar residues; sequence MSSEAVAQATAATTSP. Disordered regions lie at residues 1–55, 119–228, 269–327, 432–511, and 525–593; these read MSSE…MIPP, QPAL…RTDS, TVAD…STVP, FAQQ…GTDD, and QREQ…SKET. Over residues 33–44 the composition is skewed to gly residues; that stretch reads KGGGAGGGGGGE. Positions 119–134 are enriched in low complexity; that stretch reads QPALQQPRPSSQASSS. 2 stretches are compositionally biased toward polar residues: residues 143-156 and 169-190; these read RQTAGSVVSSNVSP and ETSGVVQNNDELLVPTSTSSDV. Basic and acidic residues predominate over residues 211–228; sequence GEEKSEEKRKLSGDRTDS. Polar residues predominate over residues 301–318; sequence SLNQLRSSFNLPDDSTTV. 2 stretches are compositionally biased toward low complexity: residues 432 to 445 and 454 to 464; these read FAQQQIAQSAAPTP and PSTSSGPSGAL. A compositionally biased stretch (polar residues) spans 490–501; the sequence is NGTSTSTTNGAQ. Low complexity predominate over residues 539 to 550; the sequence is QEAATAAQEAAE. A compositionally biased stretch (basic and acidic residues) spans 577-593; that stretch reads GAERRGSVDKKKNSKET. The PID domain maps to 604–788; the sequence is GVLFRARYLG…VLNSQELLGD (185 aa). 2 consecutive PDZ domains span residues 801 to 886 and 892 to 968; these read EVVV…TVVS and EVRI…MPTS.

In terms of assembly, interacts (via N-terminus) with egl-9 isoform e (via catalytic domain); the interaction regulates its trafficking; the interaction is direct. Interacts with rab-6.2 (in GTP-bound form). Post-translationally, phosphorylated on multiple Ser and Thr residues by cdk-5 which regulates its localization. In terms of processing, may be hydroxylated by egl-9 isoform e on multiple Pro residues which may prevent phosphorylation by cdk-5. Expressed in vulval epithelial cells and neurons.

Its subcellular location is the golgi apparatus. The protein localises to the golgi stack membrane. The protein resides in the trans-Golgi network membrane. It localises to the cytoplasm. It is found in the synapse. Its subcellular location is the perikaryon. Functionally, required specifically for the determination of 3 vulval precursor cell fates P5.p, P6.p and P7.p during late second and early third larval stages; required for basolateral localization of receptor tyrosine kinase let-23. Could have a general but redundant role in development, functioning in diverse cell lineages to control cell fates. Regulates the trafficking of the glr-1 subunit of AMPA-type glutamate receptors (AMPRs) in the ventral nerve cord. This may be partly through interacting with the small GTPase rab-6.2 in its active GTP-bound state. The protein is Protein lin-10 of Caenorhabditis elegans.